The primary structure comprises 102 residues: Aspartyl/glutamyl-tRNA(Asn/Gln) amidotransferase subunit C (102 aa).

The protein belongs to the GatC family. As to quaternary structure, heterotrimer of A, B and C subunits.

The catalysed reaction is L-glutamyl-tRNA(Gln) + L-glutamine + ATP + H2O = L-glutaminyl-tRNA(Gln) + L-glutamate + ADP + phosphate + H(+). It catalyses the reaction L-aspartyl-tRNA(Asn) + L-glutamine + ATP + H2O = L-asparaginyl-tRNA(Asn) + L-glutamate + ADP + phosphate + 2 H(+). Functionally, allows the formation of correctly charged Asn-tRNA(Asn) or Gln-tRNA(Gln) through the transamidation of misacylated Asp-tRNA(Asn) or Glu-tRNA(Gln) in organisms which lack either or both of asparaginyl-tRNA or glutaminyl-tRNA synthetases. The reaction takes place in the presence of glutamine and ATP through an activated phospho-Asp-tRNA(Asn) or phospho-Glu-tRNA(Gln). The protein is Aspartyl/glutamyl-tRNA(Asn/Gln) amidotransferase subunit C of Bordetella petrii (strain ATCC BAA-461 / DSM 12804 / CCUG 43448).